Here is a 118-residue protein sequence, read N- to C-terminus: U-scoloptoxin(05)-Cw1a (118 aa).

The first 22 residues, 1–22 (MNPLNLSTFIVFTLFAASATTA), serve as a signal peptide directing secretion.

It belongs to the scoloptoxin-05 family. Contains 5 disulfide bonds. As to expression, expressed by the venom gland.

The protein localises to the secreted. This chain is U-scoloptoxin(05)-Cw1a, found in Cormocephalus westwoodi (Westwood's green centipede).